A 582-amino-acid chain; its full sequence is Enhancer of polycomb-like protein 1 (582 aa).

Residues Arg238–Asn295 are a coiled coil. The segment at Pro323–Gly351 is disordered. Residues Thr352–Lys385 are a coiled coil. Residues Ala539–Gln555 show a composition bias toward low complexity. The segment at Ala539–Ser582 is disordered.

The protein belongs to the enhancer of polycomb family. As to quaternary structure, component of the NuA4 histone acetyltransferase complex.

It is found in the nucleus. In terms of biological role, component of the NuA4 histone acetyltransferase complex which is involved in transcriptional activation of selected genes principally by acetylation of nucleosomal histone H4 and H2A. The NuA4 complex is also involved in DNA repair. Involved in gene silencing by neighboring heterochromatin, blockage of the silencing spreading along the chromosome, and required for cell cycle progression through G2/M. This Aspergillus fumigatus (strain ATCC MYA-4609 / CBS 101355 / FGSC A1100 / Af293) (Neosartorya fumigata) protein is Enhancer of polycomb-like protein 1 (epl1).